A 284-amino-acid chain; its full sequence is 2-dehydro-3-deoxyphosphooctonate aldolase (284 aa).

Belongs to the KdsA family.

The protein resides in the cytoplasm. The enzyme catalyses D-arabinose 5-phosphate + phosphoenolpyruvate + H2O = 3-deoxy-alpha-D-manno-2-octulosonate-8-phosphate + phosphate. The protein operates within carbohydrate biosynthesis; 3-deoxy-D-manno-octulosonate biosynthesis; 3-deoxy-D-manno-octulosonate from D-ribulose 5-phosphate: step 2/3. It functions in the pathway bacterial outer membrane biogenesis; lipopolysaccharide biosynthesis. This chain is 2-dehydro-3-deoxyphosphooctonate aldolase, found in Pectobacterium atrosepticum (strain SCRI 1043 / ATCC BAA-672) (Erwinia carotovora subsp. atroseptica).